Consider the following 1147-residue polypeptide: PDZ domain-containing protein 8 (1147 aa).

Residues 2–24 (GLLLLILASAVLGSFLTLLAQFL) form a helical membrane-spanning segment. The 207-residue stretch at 87-293 (APPTLETCYF…LPSYKIRFKP (207 aa)) folds into the SMP-LTD domain. The PDZ domain maps to 365–448 (TVELIKGNLQ…RVLVYYQRPA (84 aa)). Ser-490, Ser-515, and Ser-532 each carry phosphoserine. The segment at 504 to 673 (ELKEETQPLS…DSSDDPQMWE (170 aa)) is disordered. A compositionally biased stretch (polar residues) spans 510 to 524 (QPLSHSPKRTPTTLS). Polar residues predominate over residues 557-576 (KPSTLKTSETTEAAQVSKPQ). The segment covering 580 to 596 (FKPPVPPRPQGRVPLPP) has biased composition (pro residues). A Phorbol-ester/DAG-type zinc finger spans residues 833–884 (KHSFQDTQFQNPTWCDYCKKKVWTKAASQCMFCAYVCHKKCQEKCLAETPLC). Positions 948–990 (RLSEPGTDLVEPSPKHTPNTSDNEGSDTEVCGSNSPSKRGNSA) are disordered. 2 positions are modified to phosphoserine: Ser-960 and Ser-973. Over residues 978–987 (CGSNSPSKRG) the composition is skewed to polar residues. Residues 1021-1056 (PTEERIQKLEFMLDKLQNEIDQELEHNNSLVREEKE) adopt a coiled-coil conformation. Positions 1126-1137 (QLIDSQPFSNIS) are enriched in polar residues. The tract at residues 1126-1147 (QLIDSQPFSNISDDLFGPSESV) is disordered.

Interacts with MSN.

It is found in the endoplasmic reticulum membrane. Its function is as follows. Molecular tethering protein that connects endoplasmic reticulum and mitochondria membranes. PDZD8-dependent endoplasmic reticulum-mitochondria membrane tethering is essential for endoplasmic reticulum-mitochondria Ca(2+) transfer. In neurons, involved in the regulation of dendritic Ca(2+) dynamics by regulating mitochondrial Ca(2+) uptake in neurons. This chain is PDZ domain-containing protein 8, found in Mus musculus (Mouse).